The chain runs to 384 residues: MAKHLFTSESVSEGHPDKIADQISDAVLDAILEQDPKARVACETYVKTGMVMVGGEVTTSAWVDIEEITRETVREIGYVHSDMGFDANSCAVLNTIGKQSPDINQGVDKADPKEQGAGDQGIMFGYATNETPILMPAPITYSHLLVQKQAEVRKSGKLDFLRPDAKSQVTFQYDQGKIVGIDAVVLSTQHCDSVTTPDLREAVMEEIIKPVLPAEWLNKDTNFFINPTGRFVIGGPMGDCGLTGRKIIVDTYGGAARHGGGAFSGKDPSKVDRSAAYAARYVAKNIVAAGMADRCEIQLSYAIGVADPTSIMVETFGTEKVSHDIIIEAVRQNFDLRPYGLQEMLNLLQPIYKKTAAYGHFGREEFPWEATDKAAILRDFAGIK.

An ATP-binding site is contributed by His15. Asp17 is a Mg(2+) binding site. Position 43 (Glu43) interacts with K(+). 2 residues coordinate L-methionine: Glu56 and Gln99. Positions 99–109 (QSPDINQGVDK) are flexible loop. ATP-binding positions include 164–166 (DAK), 230–231 (RF), Asp239, 245–246 (RK), Ala262, and Lys266. Residue Asp239 coordinates L-methionine. L-methionine is bound at residue Lys270.

It belongs to the AdoMet synthase family. As to quaternary structure, homotetramer; dimer of dimers. The cofactor is Mg(2+). It depends on K(+) as a cofactor.

The protein resides in the cytoplasm. The enzyme catalyses L-methionine + ATP + H2O = S-adenosyl-L-methionine + phosphate + diphosphate. Its pathway is amino-acid biosynthesis; S-adenosyl-L-methionine biosynthesis; S-adenosyl-L-methionine from L-methionine: step 1/1. Functionally, catalyzes the formation of S-adenosylmethionine (AdoMet) from methionine and ATP. The overall synthetic reaction is composed of two sequential steps, AdoMet formation and the subsequent tripolyphosphate hydrolysis which occurs prior to release of AdoMet from the enzyme. In Aliivibrio fischeri (strain ATCC 700601 / ES114) (Vibrio fischeri), this protein is S-adenosylmethionine synthase.